The sequence spans 348 residues: Mannonate dehydratase (348 aa).

The protein belongs to the mannonate dehydratase family. Fe(2+) serves as cofactor. The cofactor is Mn(2+).

It carries out the reaction D-mannonate = 2-dehydro-3-deoxy-D-gluconate + H2O. It participates in carbohydrate metabolism; pentose and glucuronate interconversion. Functionally, catalyzes the dehydration of D-mannonate. The protein is Mannonate dehydratase of Streptococcus agalactiae serotype III (strain NEM316).